Here is a 153-residue protein sequence, read N- to C-terminus: Deoxyuridine 5'-triphosphate nucleotidohydrolase (153 aa).

Residues 71 to 73 (RSG), asparagine 84, 88 to 90 (TID), and lysine 98 contribute to the substrate site.

The protein belongs to the dUTPase family. Requires Mg(2+) as cofactor.

It catalyses the reaction dUTP + H2O = dUMP + diphosphate + H(+). It participates in pyrimidine metabolism; dUMP biosynthesis; dUMP from dCTP (dUTP route): step 2/2. Its function is as follows. This enzyme is involved in nucleotide metabolism: it produces dUMP, the immediate precursor of thymidine nucleotides and it decreases the intracellular concentration of dUTP so that uracil cannot be incorporated into DNA. The protein is Deoxyuridine 5'-triphosphate nucleotidohydrolase of Wolbachia sp. subsp. Drosophila simulans (strain wRi).